We begin with the raw amino-acid sequence, 466 residues long: Ribulose bisphosphate carboxylase (466 aa).

Asn111 is a binding site for substrate. Lys166 serves as the catalytic Proton acceptor. Lys168 serves as a coordination point for substrate. Lys191, Asp193, and Glu194 together coordinate Mg(2+). Lys191 bears the N6-carboxylysine mark. Catalysis depends on His287, which acts as the Proton acceptor. 3 residues coordinate substrate: Arg288, His321, and Ser368.

The protein belongs to the RuBisCO large chain family. Type II subfamily. In terms of assembly, homodimer. It depends on Mg(2+) as a cofactor.

The enzyme catalyses 2 (2R)-3-phosphoglycerate + 2 H(+) = D-ribulose 1,5-bisphosphate + CO2 + H2O. It catalyses the reaction D-ribulose 1,5-bisphosphate + O2 = 2-phosphoglycolate + (2R)-3-phosphoglycerate + 2 H(+). In terms of biological role, ruBisCO catalyzes two reactions: the carboxylation of D-ribulose 1,5-bisphosphate, the primary event in carbon dioxide fixation, as well as the oxidative fragmentation of the pentose substrate. Both reactions occur simultaneously and in competition at the same active site. This chain is Ribulose bisphosphate carboxylase, found in Rhodospirillum rubrum (strain ATCC 11170 / ATH 1.1.1 / DSM 467 / LMG 4362 / NCIMB 8255 / S1).